The primary structure comprises 385 residues: Methionyl-tRNA formyltransferase, mitochondrial (385 aa).

Belongs to the Fmt family.

The protein resides in the mitochondrion. The enzyme catalyses L-methionyl-tRNA(fMet) + (6R)-10-formyltetrahydrofolate = N-formyl-L-methionyl-tRNA(fMet) + (6S)-5,6,7,8-tetrahydrofolate + H(+). Functionally, methionyl-tRNA formyltransferase that formylates methionyl-tRNA in mitochondria and is crucial for translation initiation. The sequence is that of Methionyl-tRNA formyltransferase, mitochondrial (Mtfmt) from Rattus norvegicus (Rat).